The sequence spans 597 residues: Ribosomal oxygenase 1 (597 aa).

N-acetylmethionine is present on methionine 1. The segment at 1 to 138 (MDELPNGNGA…HVDDPERPWD (138 aa)) is disordered. 2 stretches are compositionally biased toward basic residues: residues 14-24 (KRGRGRRRRQP) and 37-48 (RPRKVRRHRKSA). Low complexity predominate over residues 49–62 (ASRVAALRARALLS). Phosphoserine occurs at positions 62 and 65. Basic and acidic residues predominate over residues 72–81 (VRGKRERPAE). Serine 86 carries the phosphoserine modification. A JmjC domain is found at 250–395 (CSLRLLCPQA…DFLEAVLPLA (146 aa)). 3 residues coordinate Fe cation: histidine 296, aspartate 298, and histidine 361.

This sequence belongs to the ROX family. NO66 subfamily. As to quaternary structure, interacts with SP7/OSX; the interaction is direct. Interacts with MYC. Interacts with PHF19; leading to its recruitment to H3K36me3 sites. Fe(2+) is required as a cofactor.

The protein localises to the nucleus. It is found in the nucleolus. The protein resides in the nucleoplasm. It carries out the reaction N(6),N(6)-dimethyl-L-lysyl(36)-[histone H3] + 2 2-oxoglutarate + 2 O2 = L-lysyl(36)-[histone H3] + 2 formaldehyde + 2 succinate + 2 CO2. It catalyses the reaction N(6)-methyl-L-lysyl-[protein] + 2-oxoglutarate + O2 = L-lysyl-[protein] + formaldehyde + succinate + CO2. The catalysed reaction is L-histidyl-[protein] + 2-oxoglutarate + O2 = (3S)-3-hydroxy-L-histidyl-[protein] + succinate + CO2. Its function is as follows. Oxygenase that can act as both a histone lysine demethylase and a ribosomal histidine hydroxylase. Specifically demethylates 'Lys-4' (H3K4me) and 'Lys-36' (H3K36me) of histone H3, thereby playing a central role in histone code. Preferentially demethylates trimethylated H3 'Lys-4' (H3K4me3) and monomethylated H3 'Lys-4' (H3K4me1) residues, while it has weaker activity for dimethylated H3 'Lys-36' (H3K36me2). Acts as a regulator of osteoblast differentiation via its interaction with SP7/OSX by demethylating H3K4me and H3K36me, thereby inhibiting SP7/OSX-mediated promoter activation. Also catalyzes demethylation of non-histone proteins, such as CGAS: demethylation of monomethylated CGAS promotes interaction between CGAS and PARP1, followed by PARP1 inactivation. Also catalyzes the hydroxylation of 60S ribosomal protein L8 on 'His-216', thereby playing a role in ribosome biogenesis. Participates in MYC-induced transcriptional activation. This Rattus norvegicus (Rat) protein is Ribosomal oxygenase 1.